The sequence spans 205 residues: Small ribosomal subunit protein uS4 (205 aa).

The tract at residues 18–49 is disordered; it reads NIWGRPKSPVNKREYGPGQHGQRRKGKLSDFG. An S4 RNA-binding domain is found at 94 to 157; it reads RRLDTVVYRA…KQLALVLEAN (64 aa).

It belongs to the universal ribosomal protein uS4 family. Part of the 30S ribosomal subunit. Contacts protein S5. The interaction surface between S4 and S5 is involved in control of translational fidelity.

Its function is as follows. One of the primary rRNA binding proteins, it binds directly to 16S rRNA where it nucleates assembly of the body of the 30S subunit. In terms of biological role, with S5 and S12 plays an important role in translational accuracy. In Nitrobacter winogradskyi (strain ATCC 25391 / DSM 10237 / CIP 104748 / NCIMB 11846 / Nb-255), this protein is Small ribosomal subunit protein uS4.